The sequence spans 49 residues: Disintegrin ocellatin (49 aa).

Residues 1–47 (DCESGPCCDNCKFLKEGTICKMARGDNMHHYCNGKTCDCPRNPYKGE) enclose the Disintegrin domain. Intrachain disulfides connect cysteine 2/cysteine 11, cysteine 7/cysteine 32, cysteine 8/cysteine 37, and cysteine 20/cysteine 39. The short motif at 24–26 (RGD) is the Cell attachment site element.

The protein belongs to the venom metalloproteinase (M12B) family. P-II subfamily. P-IIa sub-subfamily. Monomer. As to expression, expressed by the venom gland.

It localises to the secreted. Its function is as follows. Inhibits ADP-induced human platelet aggregation. In Echis ocellatus (Ocellated saw-scaled viper), this protein is Disintegrin ocellatin.